The primary structure comprises 337 residues: MAFFSRLNLQEGLQTFFVLQWIPVYIFLGAIPILLIPYFLLFSKFWPLAVLSLAWLTYDWNTHSQGGRRSAWVRNWTLWKYFRNYFPVKLVKTHDLSPKHNYIIANHPHGILSFGVFINFATEATGIARIFPSITPFVGTLERIFWIPIVREYVMSMGVCPVSSSALKYLLTQKGSGNAVVIVVGGAAEALLCRPGASTLFLKQRKGFVKMALQTGAYLVPSYSFGENEVFNQETFPEGTWLRLFQKTFQDTFKKILGLNFCTFHGRGFTRGSWGFLPFNRPITTVVGEPLPIPRIKRPNQKTVDKYHALYISALRKLFDQHKVEYGLPETQELTIT.

2 helical membrane-spanning segments follow: residues 22–42 (IPVY…FLLF) and 102–122 (YIIA…NFAT).

Belongs to the diacylglycerol acyltransferase family. In terms of tissue distribution, expressed in all tissues tested except pancreas.

It is found in the endoplasmic reticulum membrane. The catalysed reaction is 1,2-di-(9Z-octadecenoyl)-sn-glycerol + (9Z)-octadecenoyl-CoA = 1,2,3-tri-(9Z-octadecenoyl)-glycerol + CoA. The enzyme catalyses 1-O-(9Z-octadecenyl)-glycerol + (9Z)-octadecenoyl-CoA = 1-O-(9Z-octadecyl)-3-(9Z-octadecenoyl)-glycerol + CoA. It carries out the reaction 1-(9Z-octadecenoyl)-glycerol + (9Z)-octadecenoyl-CoA = 1,2-di-(9Z-octadecenoyl)-glycerol + CoA. Its function is as follows. Diglyceride acyltransferase that uses fatty acyl-CoA as substrate. Particularly active with oleate as a substrate. Has no wax synthase activity to produce wax esters. Able to use 1-monoalkylglycerol (1-MAkG) as an acyl acceptor for the synthesis of monoalkyl-monoacylglycerol (MAMAG). This Homo sapiens (Human) protein is Diacylglycerol O-acyltransferase 2-like protein 6.